The following is a 629-amino-acid chain: tRNA uridine 5-carboxymethylaminomethyl modification enzyme MnmG (629 aa).

13–18 is an FAD binding site; the sequence is GGGHAG. 273 to 287 serves as a coordination point for NAD(+); the sequence is GPRYCPSIEDKVVRF.

This sequence belongs to the MnmG family. In terms of assembly, homodimer. Heterotetramer of two MnmE and two MnmG subunits. The cofactor is FAD.

The protein resides in the cytoplasm. Its function is as follows. NAD-binding protein involved in the addition of a carboxymethylaminomethyl (cmnm) group at the wobble position (U34) of certain tRNAs, forming tRNA-cmnm(5)s(2)U34. The protein is tRNA uridine 5-carboxymethylaminomethyl modification enzyme MnmG of Nitrosococcus oceani (strain ATCC 19707 / BCRC 17464 / JCM 30415 / NCIMB 11848 / C-107).